A 675-amino-acid chain; its full sequence is UvrABC system protein B (675 aa).

The region spanning 32–417 (EGLSDGLAYQ…EHAGQVVEQV (386 aa)) is the Helicase ATP-binding domain. 45-52 (GVTGSGKT) is a binding site for ATP. The short motif at 98–121 (YYDYYQPEAYVPSRDLFIEKDSAI) is the Beta-hairpin element. One can recognise a Helicase C-terminal domain in the interval 436–602 (QVDDLMSEIN…QIKKQVKDII (167 aa)). The 36-residue stretch at 634–669 (IKEIAKLEKAMQQAARDLQFEEAAVLRDRIRNIKEN) folds into the UVR domain.

Belongs to the UvrB family. As to quaternary structure, forms a heterotetramer with UvrA during the search for lesions. Interacts with UvrC in an incision complex.

It is found in the cytoplasm. In terms of biological role, the UvrABC repair system catalyzes the recognition and processing of DNA lesions. A damage recognition complex composed of 2 UvrA and 2 UvrB subunits scans DNA for abnormalities. Upon binding of the UvrA(2)B(2) complex to a putative damaged site, the DNA wraps around one UvrB monomer. DNA wrap is dependent on ATP binding by UvrB and probably causes local melting of the DNA helix, facilitating insertion of UvrB beta-hairpin between the DNA strands. Then UvrB probes one DNA strand for the presence of a lesion. If a lesion is found the UvrA subunits dissociate and the UvrB-DNA preincision complex is formed. This complex is subsequently bound by UvrC and the second UvrB is released. If no lesion is found, the DNA wraps around the other UvrB subunit that will check the other stand for damage. This is UvrABC system protein B from Neisseria gonorrhoeae.